Reading from the N-terminus, the 83-residue chain is U5-theraphotoxin-Hs1b 1 (83 aa).

A signal peptide spans M1–A21. Positions S22–R49 are excised as a propeptide. 3 disulfides stabilise this stretch: C51-C63, C56-C68, and C62-C75.

Belongs to the neurotoxin 10 (Hwtx-1) family. 51 (Hntx-8) subfamily. Hntx-8 sub-subfamily. In terms of tissue distribution, expressed by the venom gland.

Its subcellular location is the secreted. Functionally, weakly inhibits 5HT3A receptors and Kv1.3/KCNA3 voltage-gated potassium channels. Agglutinates erythrocytes. In Cyriopagopus schmidti (Chinese bird spider), this protein is U5-theraphotoxin-Hs1b 1.